The sequence spans 452 residues: Alkane uptake protein A (452 aa).

The first 36 residues, 1-36, serve as a signal peptide directing secretion; that stretch reads MSERSVYMVLSPRFSVRAVSLAVAAVSASLSMPTSA.

This sequence belongs to the OmpP1/FadL family. As to quaternary structure, interacts with the inner membrane protein AupB.

It localises to the cell outer membrane. Functionally, required for growth on alkanes. Probably involved in the uptake of micelle-solubilized alkanes. In Marinobacter nauticus (strain ATCC 49840 / DSM 8798 / CIP 103578 / SP17) (Marinobacter hydrocarbonoclasticus), this protein is Alkane uptake protein A.